The primary structure comprises 569 residues: MQLMEYTQLALFLGLLALMSPVLGRFIGRAVLRGEQTWLHSVLGPVERLIYRASGIRPEARQSWRQYAASLCAFSAAGFLMTFGVLMLQDKLPLNPQGFPGLSWHLAFNTAVSFLTNTNWQSYAGESTVSHFSQLVGLAYHNFVSAAAGLAVAVAVMRGLASQESKTIGNFWADLVRSVLYVLLPISLVLAVVLVGQGVVQTMSAGTEVATLEGGHQFIAMGPTASQVAIKMLGTNGGGFFNANAAHPLENPTALSNLLQMLAIFIIPSSLVFTLGEAVSNRRHAWTVWFVMACLFMVGTLSLYKAETLGTPLLTEVAQAPVTNMEGKEVRFGIFGSAMFATVTTDASCGAVNAMHDSLTPLGGLVTLVNMQMGEVIFGGVGSGLYGMVLFILLTVFLAGLMVGRTPDYLGKRIEGREVTLAMLALIIAATPPLLFSAVAAVSGWGQAALNNAGAHGFSEILYAYTSGVQNNGSAFAGLNANSPAWNVTLALAMLIGRFGVMLPMLGVAGSMASRKARPIGEFSFPVSGFTFGLLLTLVIVIVGALTYLPALALGPVVEHFQMLDGLLH.

10 helical membrane passes run 3-23 (LMEY…SPVL), 68-88 (AASL…VLML), 136-156 (VGLA…AVAV), 179-199 (VLYV…GQGV), 259-279 (LQML…GEAV), 284-304 (HAWT…LSLY), 384-404 (GLYG…LMVG), 422-442 (AMLA…VAAV), 490-510 (LALA…GVAG), and 534-554 (LLLT…ALAL).

The protein belongs to the KdpA family. As to quaternary structure, the system is composed of three essential subunits: KdpA, KdpB and KdpC.

It localises to the cell inner membrane. In terms of biological role, part of the high-affinity ATP-driven potassium transport (or Kdp) system, which catalyzes the hydrolysis of ATP coupled with the electrogenic transport of potassium into the cytoplasm. This subunit binds the periplasmic potassium ions and delivers the ions to the membrane domain of KdpB through an intramembrane tunnel. The polypeptide is Potassium-transporting ATPase potassium-binding subunit (Nitratidesulfovibrio vulgaris (strain DP4) (Desulfovibrio vulgaris)).